Here is a 609-residue protein sequence, read N- to C-terminus: Actin-interacting protein 1-2 (609 aa).

WD repeat units lie at residues 2 to 42 (ELSE…VTLD), 54 to 93 (EHAY…VLKN), 97 to 141 (VLAG…GEFD), 142 to 182 (GHSR…FKLS), 185 to 224 (EHSN…ILGE), 230 to 269 (GHKG…SGSL), 277 to 318 (GSSG…KSPF), 322 to 362 (GHMK…CGKL), 445 to 484 (NLGF…LTEE), 489 to 528 (RHRG…MKLK), 532 to 571 (YHSA…SSRM), and 576 to 609 (AHLG…FTPQ).

Expressed in leaves, stems, flower buds and flowers.

In terms of biological role, binds actin. Enhances the F-actin depolymerization activity of actin-depolymerizing factor (ADF) proteins. The chain is Actin-interacting protein 1-2 from Arabidopsis thaliana (Mouse-ear cress).